The chain runs to 82 residues: Sulfur carrier protein TusA (82 aa).

Residue Cys19 is the Cysteine persulfide intermediate of the active site.

Belongs to the sulfur carrier protein TusA family.

It localises to the cytoplasm. In terms of biological role, sulfur carrier protein which probably makes part of a sulfur-relay system. The protein is Sulfur carrier protein TusA of Vibrio campbellii (strain ATCC BAA-1116).